The sequence spans 548 residues: Fluconazole resistance protein 1 (548 aa).

The tract at residues 30 to 94 (SAREDETRKP…WNGPSDPENP (65 aa)) is disordered. The span at 31-51 (AREDETRKPENTDKKECKPDY) shows a compositional bias: basic and acidic residues. The span at 60-73 (SCSESSTDSDSSGS) shows a compositional bias: low complexity. Transmembrane regions (helical) follow at residues 104–124 (LVVF…SIYT), 139–159 (VVAT…PIIF), 179–199 (FFFM…GLIV), 203–223 (ISGI…ADII), 230–250 (LVLG…PLLG), 261–281 (FIFW…AFFF), 347–367 (IAVA…VFVG), 376–396 (VGLA…LFGI), 416–436 (FLIV…LFGW), 440–460 (VHWI…FNIF), 476–496 (ASVF…FPLF), and 511–531 (VAWG…IPFI).

Belongs to the major facilitator superfamily.

The protein localises to the membrane. Its function is as follows. Probable efflux transporter. Confers resistance to the azole derivative fluconazole (FCZ). In Saccharomyces cerevisiae (strain ATCC 204508 / S288c) (Baker's yeast), this protein is Fluconazole resistance protein 1 (FLR1).